The following is a 932-amino-acid chain: uncharacterized protein (932 aa).

Disordered stretches follow at residues 26-120 (NINN…NMLT), 158-289 (MGIG…EEKK), 304-617 (NNNN…INHD), 635-720 (QQSQ…PPLV), and 802-863 (SVSS…FPLE). 2 stretches are compositionally biased toward low complexity: residues 41–105 (NNNI…IISS) and 163–241 (NNNN…YGNN). A compositionally biased stretch (polar residues) spans 242 to 253 (TPVNYIHNNSTP). The span at 265 to 285 (SDEEDSVLYSSDDSEESDYEE) shows a compositional bias: acidic residues. The segment covering 304 to 475 (NNNNINNNNM…NNNNNNNNNN (172 aa)) has biased composition (low complexity). 2 stretches are compositionally biased toward polar residues: residues 476 to 492 (ENYV…NTES) and 527 to 540 (DIPN…TKQQ). The segment covering 548-590 (SPVYSPPNNLSPLSSPYLHHNSNNNSNNGGGNSNNNNTNFNYG) has biased composition (low complexity). Basic and acidic residues predominate over residues 606 to 617 (GERDPPHVINHD). Low complexity-rich tracts occupy residues 635–666 (QQSQ…PSSS), 696–707 (SPPNTSISSLSS), and 813–853 (NSSN…NNNS). A compositionally biased stretch (basic and acidic residues) spans 854-863 (EPKKPKFPLE).

This is an uncharacterized protein from Dictyostelium discoideum (Social amoeba).